The primary structure comprises 492 residues: Glycogen synthase 1 (492 aa).

Lysine 15 contacts ADP-alpha-D-glucose.

Belongs to the glycosyltransferase 1 family. Bacterial/plant glycogen synthase subfamily.

The catalysed reaction is [(1-&gt;4)-alpha-D-glucosyl](n) + ADP-alpha-D-glucose = [(1-&gt;4)-alpha-D-glucosyl](n+1) + ADP + H(+). It participates in glycan biosynthesis; glycogen biosynthesis. In terms of biological role, synthesizes alpha-1,4-glucan chains using ADP-glucose. The protein is Glycogen synthase 1 of Trichormus variabilis (strain ATCC 29413 / PCC 7937) (Anabaena variabilis).